The following is a 647-amino-acid chain: 1-phosphatidylinositol 4,5-bisphosphate phosphodiesterase zeta-1 (647 aa).

The region spanning 43-78 is the EF-hand domain; the sequence is CHFAHVKHIFKENDRQNQGRITIEEFRAIYRCIVHR. A PI-PLC X-box domain is found at 163 to 307; that stretch reads QDMNHPLSDY…LKFKILVKNR (145 aa). Active-site residues include His178 and His223. One can recognise a PI-PLC Y-box domain in the interval 386-502; the sequence is LSDLVIYTKA…GYILKPDILR (117 aa). The 126-residue stretch at 502–627 folds into the C2 domain; it reads RDTTLGFNPN…KGYRRVPLFS (126 aa).

Interacts via its C2 domain with PtdIns(3)P and, to a lesser extent, PtdIns(5)P in vitro. Requires Ca(2+) as cofactor. As to expression, highly expressed in postpuberal testis, where expression is sperm cell-specific. Also expressed in brain of both sexes.

It is found in the nucleus. It localises to the cytoplasm. Its subcellular location is the perinuclear region. It carries out the reaction a 1,2-diacyl-sn-glycero-3-phospho-(1D-myo-inositol-4,5-bisphosphate) + H2O = 1D-myo-inositol 1,4,5-trisphosphate + a 1,2-diacyl-sn-glycerol + H(+). Functionally, the production of the second messenger molecules diacylglycerol (DAG) and inositol 1,4,5-trisphosphate (IP3) is mediated by activated phosphatidylinositol-specific phospholipase C enzymes. In vitro, hydrolyzes PtdIns(4,5)P2 in a Ca(2+)-dependent manner. Triggers intracellular Ca(2+) oscillations in oocytes solely during M phase and is involved in inducing oocyte activation and initiating embryonic development up to the blastocyst stage. Is therefore a strong candidate for the egg-activating soluble sperm factor that is transferred from the sperm into the egg cytoplasm following gamete membrane fusion. May exert an inhibitory effect on phospholipase-C-coupled processes that depend on calcium ions and protein kinase C, including CFTR trafficking and function. The sequence is that of 1-phosphatidylinositol 4,5-bisphosphate phosphodiesterase zeta-1 from Mus musculus (Mouse).